The following is a 213-amino-acid chain: MPADSAPMNLTHHFLIAMPGLEDESFARSVVYLCEHSERGALGLIINKPSDLSLKGLFDKVDLSLRREDLSLEPVFRGGPVQTERGFVLHEAMGPSSGKQAAGEGGAQAEGEGAEESAYASTMSIPGGLEMTTSKDVLEALSTGAGPRRVLVTLGYSSWGEGQLESELAENSWLTVGADLSVIFDTPVGQRYDRALALLGLQSWMLSPEAGHA.

The disordered stretch occupies residues 93 to 120 (MGPSSGKQAAGEGGAQAEGEGAEESAYA).

The protein belongs to the UPF0301 (AlgH) family.

The sequence is that of UPF0301 protein Aave_0907 from Paracidovorax citrulli (strain AAC00-1) (Acidovorax citrulli).